Here is a 156-residue protein sequence, read N- to C-terminus: Myosin, essential light chain, adductor muscle (156 aa).

EF-hand domains follow at residues 6–43 (DEIDDLKDVFELFDFWDGRDGAVDAFKLGDVCRCLGIN) and 81–116 (GTFADYMEAFKTFDREGQGFISGAELRHVLTALGER).

In terms of biological role, in molluscan muscle, calcium regulation is associated with myosin rather than with actin. Muscle myosin contains two types of light chains: the catalytic light chain, essential for ATPase activity, and the regulatory light chain, a calcium-binding protein responsible for Ca(2+) dependent binding and Ca(2+) dependent Mg-ATPase activity. This Mizuhopecten yessoensis (Japanese scallop) protein is Myosin, essential light chain, adductor muscle.